Consider the following 172-residue polypeptide: Protein-export protein SecB (172 aa).

This sequence belongs to the SecB family. In terms of assembly, homotetramer, a dimer of dimers. One homotetramer interacts with 1 SecA dimer.

The protein resides in the cytoplasm. In terms of biological role, one of the proteins required for the normal export of preproteins out of the cell cytoplasm. It is a molecular chaperone that binds to a subset of precursor proteins, maintaining them in a translocation-competent state. It also specifically binds to its receptor SecA. The polypeptide is Protein-export protein SecB (Haemophilus ducreyi (strain 35000HP / ATCC 700724)).